Here is an 883-residue protein sequence, read N- to C-terminus: Valine--tRNA ligase (883 aa).

Residues 46–56 (PNVTGKLHLGH) carry the 'HIGH' region motif. The 'KMSKS' region signature appears at 520 to 524 (KMSKS). Lys-523 contacts ATP. A coiled-coil region spans residues 809–883 (LADLLNVEEE…RIKEMEKLIK (75 aa)).

Belongs to the class-I aminoacyl-tRNA synthetase family. ValS type 1 subfamily. In terms of assembly, monomer.

It localises to the cytoplasm. The enzyme catalyses tRNA(Val) + L-valine + ATP = L-valyl-tRNA(Val) + AMP + diphosphate. Catalyzes the attachment of valine to tRNA(Val). As ValRS can inadvertently accommodate and process structurally similar amino acids such as threonine, to avoid such errors, it has a 'posttransfer' editing activity that hydrolyzes mischarged Thr-tRNA(Val) in a tRNA-dependent manner. The protein is Valine--tRNA ligase of Streptococcus mutans serotype c (strain ATCC 700610 / UA159).